Consider the following 377-residue polypeptide: Glutamate 5-kinase (377 aa).

Lysine 22 is a binding site for ATP. Substrate-binding residues include serine 62, aspartate 149, and asparagine 161. ATP-binding positions include 181–182 (TD) and 223–229 (TGGMVTK). A PUA domain is found at 285–363 (RGAIVVDAGA…AQLKRFLGPQ (79 aa)).

It belongs to the glutamate 5-kinase family.

It localises to the cytoplasm. The enzyme catalyses L-glutamate + ATP = L-glutamyl 5-phosphate + ADP. Its pathway is amino-acid biosynthesis; L-proline biosynthesis; L-glutamate 5-semialdehyde from L-glutamate: step 1/2. Catalyzes the transfer of a phosphate group to glutamate to form L-glutamate 5-phosphate. This chain is Glutamate 5-kinase, found in Bifidobacterium longum subsp. infantis (strain ATCC 15697 / DSM 20088 / JCM 1222 / NCTC 11817 / S12).